A 188-amino-acid chain; its full sequence is Accessory gene regulator protein B (188 aa).

4 helical membrane-spanning segments follow: residues 49 to 69 (VALLFHTFLYTLITHLTYFFV), 82 to 102 (LLCHIQNLVLFVALPWSIVHF), 104 to 124 (VSWTFMIFVAFIAFIIIICYA), and 163 to 183 (YMQLIALGMCIEAITLLPIFF).

The protein belongs to the AgrB family.

Its subcellular location is the cell membrane. Its function is as follows. Essential for the production of a quorum sensing system signal molecule, the autoinducing peptide (AIP). This quorum sensing system is responsible for the regulation of the expression of virulence factor genes. Involved in the proteolytic processing of AgrD, the precursor of AIP. The chain is Accessory gene regulator protein B from Staphylococcus lugdunensis.